Here is a 213-residue protein sequence, read N- to C-terminus: Thymidylate kinase (213 aa).

ATP is bound at residue 11-18 (GPDGAGKT).

This sequence belongs to the thymidylate kinase family.

It carries out the reaction dTMP + ATP = dTDP + ADP. Its function is as follows. Phosphorylation of dTMP to form dTDP in both de novo and salvage pathways of dTTP synthesis. This Oenococcus oeni (strain ATCC BAA-331 / PSU-1) protein is Thymidylate kinase.